Here is a 597-residue protein sequence, read N- to C-terminus: Elongation factor 4 (597 aa).

One can recognise a tr-type G domain in the interval 2–184 (DHIRNFSIIA…ALVAKVPPPK (183 aa)). GTP is bound by residues 14-19 (DHGKST) and 131-134 (NKID).

This sequence belongs to the TRAFAC class translation factor GTPase superfamily. Classic translation factor GTPase family. LepA subfamily.

The protein resides in the cell inner membrane. The enzyme catalyses GTP + H2O = GDP + phosphate + H(+). In terms of biological role, required for accurate and efficient protein synthesis under certain stress conditions. May act as a fidelity factor of the translation reaction, by catalyzing a one-codon backward translocation of tRNAs on improperly translocated ribosomes. Back-translocation proceeds from a post-translocation (POST) complex to a pre-translocation (PRE) complex, thus giving elongation factor G a second chance to translocate the tRNAs correctly. Binds to ribosomes in a GTP-dependent manner. The sequence is that of Elongation factor 4 from Paraburkholderia xenovorans (strain LB400).